The following is a 162-amino-acid chain: NADH-ubiquinone oxidoreductase 24 kDa subunit homolog C11E3.12, mitochondrial (162 aa).

[2Fe-2S] cluster-binding residues include Cys88, Cys93, Cys125, and Cys129.

Belongs to the complex I 24 kDa subunit family. The cofactor is [2Fe-2S] cluster.

Its subcellular location is the mitochondrion. This is NADH-ubiquinone oxidoreductase 24 kDa subunit homolog C11E3.12, mitochondrial from Schizosaccharomyces pombe (strain 972 / ATCC 24843) (Fission yeast).